Consider the following 52-residue polypeptide: Large ribosomal subunit protein bL33 (52 aa).

It belongs to the bacterial ribosomal protein bL33 family.

The polypeptide is Large ribosomal subunit protein bL33 (Chlamydia trachomatis serovar L2 (strain ATCC VR-902B / DSM 19102 / 434/Bu)).